We begin with the raw amino-acid sequence, 246 residues long: tRNA (guanine-N(1)-)-methyltransferase (246 aa).

S-adenosyl-L-methionine contacts are provided by residues glycine 113 and 133–138; that span reads IGDYVL.

It belongs to the RNA methyltransferase TrmD family. Homodimer.

It is found in the cytoplasm. It carries out the reaction guanosine(37) in tRNA + S-adenosyl-L-methionine = N(1)-methylguanosine(37) in tRNA + S-adenosyl-L-homocysteine + H(+). Specifically methylates guanosine-37 in various tRNAs. This is tRNA (guanine-N(1)-)-methyltransferase from Haemophilus influenzae (strain PittGG).